A 400-amino-acid chain; its full sequence is MRIGTPNSPSAVRVMLLGSGELGKEVAISLQRYGVEVIAVDRYAGAPAQQVAHRSHVVDMTDPGAIHRLVEFERPHFVVPEIEAIATDALVEIERAGLAEVVPNARAVQLTMNREGIRRLAAEKLGLPTSPYAFADSCAALAEAAAKIGFPCFVKPVMSSSGKGQSLLESPSDVQAAWDHARQGGRVGASRVIVEGRIDFDFEITLLTVRAPVSGGDAGIAFCEPVGHRQQAGDYVESWQPQSLNPKARERAEAIARTVVDALGGRGLFGVELFVRGDEVWFSEVSPRPHDTGMVTMVSQAQNEFELHVRAILGLPVDSSLRRPGASAVIYGGVAAEGIAFEGLERALAVPESEVRLFGKPEAHPRRRMGVALAAADTVEEARRRAVLAASRVRPVKIPA.

N(1)-(5-phospho-beta-D-ribosyl)glycinamide is bound by residues 21-22 (EL) and Glu81. ATP is bound by residues Arg114, Lys155, 160-165 (SSGKGQ), 195-198 (EGRI), and Glu203. The 195-residue stretch at 119–313 (RLAAEKLGLP…EFELHVRAIL (195 aa)) folds into the ATP-grasp domain. 2 residues coordinate Mg(2+): Glu272 and Glu284. Residues Asp291, Lys360, and 367 to 368 (RR) contribute to the N(1)-(5-phospho-beta-D-ribosyl)glycinamide site.

Belongs to the PurK/PurT family. As to quaternary structure, homodimer.

It carries out the reaction N(1)-(5-phospho-beta-D-ribosyl)glycinamide + formate + ATP = N(2)-formyl-N(1)-(5-phospho-beta-D-ribosyl)glycinamide + ADP + phosphate + H(+). It participates in purine metabolism; IMP biosynthesis via de novo pathway; N(2)-formyl-N(1)-(5-phospho-D-ribosyl)glycinamide from N(1)-(5-phospho-D-ribosyl)glycinamide (formate route): step 1/1. In terms of biological role, involved in the de novo purine biosynthesis. Catalyzes the transfer of formate to 5-phospho-ribosyl-glycinamide (GAR), producing 5-phospho-ribosyl-N-formylglycinamide (FGAR). Formate is provided by PurU via hydrolysis of 10-formyl-tetrahydrofolate. In Methylococcus capsulatus (strain ATCC 33009 / NCIMB 11132 / Bath), this protein is Formate-dependent phosphoribosylglycinamide formyltransferase.